Reading from the N-terminus, the 395-residue chain is Phosphoglycerate kinase (395 aa).

Substrate contacts are provided by residues D22 to N24, R38, H61 to R64, R119, and R152. Residues K203, G294, E325, and G351–T354 each bind ATP.

The protein belongs to the phosphoglycerate kinase family. In terms of assembly, monomer.

The protein resides in the cytoplasm. The catalysed reaction is (2R)-3-phosphoglycerate + ATP = (2R)-3-phospho-glyceroyl phosphate + ADP. It participates in carbohydrate degradation; glycolysis; pyruvate from D-glyceraldehyde 3-phosphate: step 2/5. The polypeptide is Phosphoglycerate kinase (Hydrogenobaculum sp. (strain Y04AAS1)).